The following is a 249-amino-acid chain: Isoamyl acetate-hydrolyzing esterase 1 homolog (249 aa).

Ser24 serves as the catalytic Nucleophile. N6-succinyllysine is present on Lys63. Residue Asp197 is the Proton donor of the active site. His200 functions as the Proton acceptor in the catalytic mechanism.

Belongs to the 'GDSL' lipolytic enzyme family. IAH1 subfamily.

Its function is as follows. Probable lipase. This is Isoamyl acetate-hydrolyzing esterase 1 homolog (Iah1) from Rattus norvegicus (Rat).